We begin with the raw amino-acid sequence, 469 residues long: Probable Xaa-Pro aminopeptidase PEPP (469 aa).

The Mn(2+) site is built by aspartate 264, aspartate 275, glutamate 398, and glutamate 438.

Belongs to the peptidase M24B family. Requires Mn(2+) as cofactor.

The enzyme catalyses Release of any N-terminal amino acid, including proline, that is linked to proline, even from a dipeptide or tripeptide.. In terms of biological role, catalyzes the removal of a penultimate prolyl residue from the N-termini of peptides. This chain is Probable Xaa-Pro aminopeptidase PEPP (PEPP), found in Ajellomyces capsulatus (strain G186AR / H82 / ATCC MYA-2454 / RMSCC 2432) (Darling's disease fungus).